The sequence spans 93 residues: Non-histone chromosomal protein 6A (93 aa).

Disordered stretches follow at residues 1–23 (MVTPREPKKRTTRKKKDPNAPKR) and 69–93 (PYEAKAQADKKRYESEKELYNATLA). The segment covering 7–16 (PKKRTTRKKK) has biased composition (basic residues). A DNA-binding region (HMG box) is located at residues 21–89 (PKRALSAYMF…RYESEKELYN (69 aa)). A compositionally biased stretch (basic and acidic residues) spans 69–87 (PYEAKAQADKKRYESEKEL).

The protein belongs to the NHP6 family. As to quaternary structure, weakly associates with the stable SPT16-POB3 heterodimer to form the FACT (yFACT or SNP) complex, which is associated with nucleosomes. Multiple molecules of NHP6 (NHP6A and/or NHP6B) are required to recruit the SPT16-POB3 heterodimer to DNA.

Its subcellular location is the nucleus. It localises to the chromosome. Functionally, DNA-binding protein that induces severe bending of DNA. Required for DNA-binding by the FACT complex, a general chromatin factor that acts to reorganize nucleosomes. The FACT complex is involved in multiple processes that require DNA as a template such as mRNA elongation, DNA replication and DNA repair. Also augments the fidelity of transcription by RNA polymerase III independently of any role in the FACT complex. Required for transcriptional initiation fidelity of some but not all tRNA genes. Seems to be functionally redundant with NHP6B. The chain is Non-histone chromosomal protein 6A (NHP6A) from Saccharomyces cerevisiae (strain ATCC 204508 / S288c) (Baker's yeast).